The sequence spans 158 residues: Large ribosomal subunit protein bL21 (158 aa).

The tract at residues threonine 127–aspartate 158 is disordered. Positions lysine 131–aspartate 158 are enriched in low complexity.

The protein belongs to the bacterial ribosomal protein bL21 family. As to quaternary structure, part of the 50S ribosomal subunit. Contacts protein L20.

Functionally, this protein binds to 23S rRNA in the presence of protein L20. In Bartonella henselae (strain ATCC 49882 / DSM 28221 / CCUG 30454 / Houston 1) (Rochalimaea henselae), this protein is Large ribosomal subunit protein bL21.